A 443-amino-acid chain; its full sequence is Thymidine phosphorylase (443 aa).

It belongs to the thymidine/pyrimidine-nucleoside phosphorylase family. In terms of assembly, homodimer.

It carries out the reaction thymidine + phosphate = 2-deoxy-alpha-D-ribose 1-phosphate + thymine. The protein operates within pyrimidine metabolism; dTMP biosynthesis via salvage pathway; dTMP from thymine: step 1/2. Functionally, the enzymes which catalyze the reversible phosphorolysis of pyrimidine nucleosides are involved in the degradation of these compounds and in their utilization as carbon and energy sources, or in the rescue of pyrimidine bases for nucleotide synthesis. The chain is Thymidine phosphorylase from Shewanella loihica (strain ATCC BAA-1088 / PV-4).